A 188-amino-acid chain; its full sequence is MVKIAIFASGSGSNFENIVEHVESGKLENIEVTALYTDHQNAFCIDRAKKHDIPVYINEPKQFDSKAAYEQHLVTLLNKDKVEWIILAGYMRLIGPDLLASFEGKILNIHPSLLPKYKGIDAIGQAYHSGDTITGSTVHYVDCGMDTGEIIEQRQCDIRPDDSKEQLEEKVKKLEYELYPSVIAKIVK.

N(1)-(5-phospho-beta-D-ribosyl)glycinamide is bound at residue 12 to 14; it reads GSN. (6R)-10-formyltetrahydrofolate is bound by residues K66, 91–94, and N108; that span reads MRLI. Catalysis depends on H110, which acts as the Proton donor.

The protein belongs to the GART family.

It catalyses the reaction N(1)-(5-phospho-beta-D-ribosyl)glycinamide + (6R)-10-formyltetrahydrofolate = N(2)-formyl-N(1)-(5-phospho-beta-D-ribosyl)glycinamide + (6S)-5,6,7,8-tetrahydrofolate + H(+). It participates in purine metabolism; IMP biosynthesis via de novo pathway; N(2)-formyl-N(1)-(5-phospho-D-ribosyl)glycinamide from N(1)-(5-phospho-D-ribosyl)glycinamide (10-formyl THF route): step 1/1. Its function is as follows. Catalyzes the transfer of a formyl group from 10-formyltetrahydrofolate to 5-phospho-ribosyl-glycinamide (GAR), producing 5-phospho-ribosyl-N-formylglycinamide (FGAR) and tetrahydrofolate. In Staphylococcus aureus (strain Mu50 / ATCC 700699), this protein is Phosphoribosylglycinamide formyltransferase.